Reading from the N-terminus, the 161-residue chain is Nucleotide-binding protein H16_A3060 (161 aa).

Belongs to the YajQ family.

Nucleotide-binding protein. In Cupriavidus necator (strain ATCC 17699 / DSM 428 / KCTC 22496 / NCIMB 10442 / H16 / Stanier 337) (Ralstonia eutropha), this protein is Nucleotide-binding protein H16_A3060.